The primary structure comprises 268 residues: 4-hydroxy-tetrahydrodipicolinate reductase (268 aa).

NAD(+)-binding positions include 8 to 13 and D35; that span reads GAAGRM. Residue R36 coordinates NADP(+). NAD(+) contacts are provided by residues 99-101 and 123-126; these read GTT and AANF. H156 functions as the Proton donor/acceptor in the catalytic mechanism. H157 serves as a coordination point for (S)-2,3,4,5-tetrahydrodipicolinate. Catalysis depends on K160, which acts as the Proton donor. Residue 166 to 167 coordinates (S)-2,3,4,5-tetrahydrodipicolinate; that stretch reads GT.

The protein belongs to the DapB family.

The protein resides in the cytoplasm. The enzyme catalyses (S)-2,3,4,5-tetrahydrodipicolinate + NAD(+) + H2O = (2S,4S)-4-hydroxy-2,3,4,5-tetrahydrodipicolinate + NADH + H(+). It carries out the reaction (S)-2,3,4,5-tetrahydrodipicolinate + NADP(+) + H2O = (2S,4S)-4-hydroxy-2,3,4,5-tetrahydrodipicolinate + NADPH + H(+). Its pathway is amino-acid biosynthesis; L-lysine biosynthesis via DAP pathway; (S)-tetrahydrodipicolinate from L-aspartate: step 4/4. In terms of biological role, catalyzes the conversion of 4-hydroxy-tetrahydrodipicolinate (HTPA) to tetrahydrodipicolinate. The polypeptide is 4-hydroxy-tetrahydrodipicolinate reductase (Pseudomonas aeruginosa (strain LESB58)).